The sequence spans 553 residues: CTP synthase (553 aa).

An amidoligase domain region spans residues 1 to 270; the sequence is MTKYVFVTGG…DDLICRELEL (270 aa). Ser-13 serves as a coordination point for CTP. Ser-13 is a binding site for UTP. Residues 14-19 and Asp-71 contribute to the ATP site; that span reads SLGKGI. Mg(2+) contacts are provided by Asp-71 and Glu-144. CTP is bound by residues 151-153, 191-196, and Lys-227; these read DIE and KTKPTQ. Residues 191–196 and Lys-227 contribute to the UTP site; that span reads KTKPTQ. In terms of domain architecture, Glutamine amidotransferase type-1 spans 295–547; sequence TIGMVGKYVE…IKAALIHQDA (253 aa). L-glutamine is bound at residue Gly-356. Cys-383 acts as the Nucleophile; for glutamine hydrolysis in catalysis. L-glutamine contacts are provided by residues 384-387, Glu-407, and Arg-473; that span reads LGMQ. Active-site residues include His-520 and Glu-522.

This sequence belongs to the CTP synthase family. As to quaternary structure, homotetramer.

It catalyses the reaction UTP + L-glutamine + ATP + H2O = CTP + L-glutamate + ADP + phosphate + 2 H(+). The catalysed reaction is L-glutamine + H2O = L-glutamate + NH4(+). The enzyme catalyses UTP + NH4(+) + ATP = CTP + ADP + phosphate + 2 H(+). Its pathway is pyrimidine metabolism; CTP biosynthesis via de novo pathway; CTP from UDP: step 2/2. With respect to regulation, allosterically activated by GTP, when glutamine is the substrate; GTP has no effect on the reaction when ammonia is the substrate. The allosteric effector GTP functions by stabilizing the protein conformation that binds the tetrahedral intermediate(s) formed during glutamine hydrolysis. Inhibited by the product CTP, via allosteric rather than competitive inhibition. In terms of biological role, catalyzes the ATP-dependent amination of UTP to CTP with either L-glutamine or ammonia as the source of nitrogen. Regulates intracellular CTP levels through interactions with the four ribonucleotide triphosphates. The sequence is that of CTP synthase from Polynucleobacter asymbioticus (strain DSM 18221 / CIP 109841 / QLW-P1DMWA-1) (Polynucleobacter necessarius subsp. asymbioticus).